Reading from the N-terminus, the 135-residue chain is Putative pre-16S rRNA nuclease (135 aa).

Belongs to the YqgF nuclease family.

It localises to the cytoplasm. Could be a nuclease involved in processing of the 5'-end of pre-16S rRNA. This is Putative pre-16S rRNA nuclease from Maridesulfovibrio salexigens (strain ATCC 14822 / DSM 2638 / NCIMB 8403 / VKM B-1763) (Desulfovibrio salexigens).